The following is a 138-amino-acid chain: Protein Turandot B (138 aa).

The first 21 residues, 1–21 (MNFKTSLICFALLLIGTLCSA), serve as a signal peptide directing secretion.

The protein belongs to the Turandot family.

The protein localises to the secreted. A humoral factor that may play a role in stress tolerance. The protein is Protein Turandot B of Drosophila melanogaster (Fruit fly).